The primary structure comprises 633 residues: 1-deoxy-D-xylulose-5-phosphate synthase (633 aa).

Polar residues predominate over residues 1–12 (MSEPTANLQPAS). Residues 1-21 (MSEPTANLQPASRTPLLDRVN) are disordered. Thiamine diphosphate contacts are provided by residues histidine 86 and 127–129 (GHA). Aspartate 158 serves as a coordination point for Mg(2+). Thiamine diphosphate-binding positions include 159 to 160 (GS), asparagine 187, and glutamate 377. Residue asparagine 187 participates in Mg(2+) binding.

This sequence belongs to the transketolase family. DXPS subfamily. As to quaternary structure, homodimer. Mg(2+) serves as cofactor. It depends on thiamine diphosphate as a cofactor.

The enzyme catalyses D-glyceraldehyde 3-phosphate + pyruvate + H(+) = 1-deoxy-D-xylulose 5-phosphate + CO2. It functions in the pathway metabolic intermediate biosynthesis; 1-deoxy-D-xylulose 5-phosphate biosynthesis; 1-deoxy-D-xylulose 5-phosphate from D-glyceraldehyde 3-phosphate and pyruvate: step 1/1. In terms of biological role, catalyzes the acyloin condensation reaction between C atoms 2 and 3 of pyruvate and glyceraldehyde 3-phosphate to yield 1-deoxy-D-xylulose-5-phosphate (DXP). This Deinococcus geothermalis (strain DSM 11300 / CIP 105573 / AG-3a) protein is 1-deoxy-D-xylulose-5-phosphate synthase.